The sequence spans 244 residues: Exosome complex component Rrp41 (244 aa).

The protein belongs to the RNase PH family. Rrp41 subfamily. As to quaternary structure, component of the archaeal exosome complex. Forms a hexameric ring-like arrangement composed of 3 Rrp41-Rrp42 heterodimers. The hexameric ring associates with a trimer of Rrp4 and/or Csl4 subunits.

The protein localises to the cytoplasm. Catalytic component of the exosome, which is a complex involved in RNA degradation. Has 3'-&gt;5' exoribonuclease activity. Can also synthesize heteromeric RNA-tails. This Nitrosopumilus maritimus (strain SCM1) protein is Exosome complex component Rrp41.